A 740-amino-acid polypeptide reads, in one-letter code: N-acetylated-alpha-linked acidic dipeptidase 2 (740 aa).

At 1-7 (MARPRHL) the chain is on the cytoplasmic side. Residues 8 to 31 (RGLGMCITAVLASFIAGFTVGWFI) form a helical; Signal-anchor for type II membrane protein membrane-spanning segment. At 32 to 740 (KPLKETTTSA…AAAGTLTNVL (709 aa)) the chain is on the extracellular side. Residues asparagine 111, asparagine 143, and asparagine 185 are each glycosylated (N-linked (GlcNAc...) asparagine). Residues arginine 200 and asparagine 247 each contribute to the substrate site. Positions 259 and 262 each coordinate Ca(2+). Residues 264 to 577 (AKEYTFRLPV…QLRGALVYEL (314 aa)) form an NAALADase region. N-linked (GlcNAc...) asparagine glycosylation occurs at asparagine 314. Histidine 367 and aspartate 377 together coordinate Zn(2+). Position 414 (glutamate 414) interacts with substrate. The Nucleophile; for NAALADase activity role is filled by glutamate 414. Glutamate 415 is a binding site for Zn(2+). Ca(2+) contacts are provided by glutamate 423 and glutamate 426. A Zn(2+)-binding site is contributed by aspartate 443. The N-linked (GlcNAc...) asparagine glycan is linked to asparagine 449. Residues 507–508 (SG), 524–526 (RAR), tyrosine 542, and 542–543 (YH) each bind substrate. Histidine 543 is a binding site for Zn(2+). An N-linked (GlcNAc...) asparagine glycan is attached at asparagine 603. The active-site Charge relay system is the serine 618. The N-linked (GlcNAc...) asparagine glycan is linked to asparagine 628. Active-site charge relay system residues include aspartate 656 and histidine 679. 689-690 (KY) is a substrate binding site.

Belongs to the peptidase M28 family. M28B subfamily. In terms of assembly, homodimer. Requires Zn(2+) as cofactor. As to expression, expressed ovary, testes and lung, but not brain.

It is found in the cell membrane. It carries out the reaction Release of an unsubstituted, C-terminal glutamyl residue, typically from Ac-Asp-Glu or folylpoly-gamma-glutamates.. In terms of biological role, has N-acetylated-alpha-linked-acidic dipeptidase (NAALADase) activity. Also exhibits a dipeptidyl-peptidase IV type activity. Inactivates the peptide neurotransmitter N-acetylaspartylglutamate. The protein is N-acetylated-alpha-linked acidic dipeptidase 2 (Naalad2) of Mus musculus (Mouse).